A 181-amino-acid chain; its full sequence is Oligoribonuclease (181 aa).

Positions 8-171 (LVWIDMEMTG…DDIRESIAEL (164 aa)) constitute an Exonuclease domain. Residue Tyr129 is part of the active site.

The protein belongs to the oligoribonuclease family.

It is found in the cytoplasm. Functionally, 3'-to-5' exoribonuclease specific for small oligoribonucleotides. In Pseudoalteromonas atlantica (strain T6c / ATCC BAA-1087), this protein is Oligoribonuclease.